Reading from the N-terminus, the 429-residue chain is S-adenosylmethionine synthase (429 aa).

Residue His14 coordinates ATP. Asp16 contributes to the Mg(2+) binding site. K(+) is bound at residue Glu42. 2 residues coordinate L-methionine: Glu55 and Gln98. Residues Gln98–Arg108 are flexible loop. Residues Asp165 to Lys167, Lys252 to Phe253, Asp261, Arg267 to Lys268, Ala284, and Lys288 contribute to the ATP site. Asp261 contacts L-methionine. L-methionine is bound at residue Lys292.

Belongs to the AdoMet synthase family. In terms of assembly, homotetramer; dimer of dimers. Mg(2+) is required as a cofactor. The cofactor is K(+).

It is found in the cytoplasm. It carries out the reaction L-methionine + ATP + H2O = S-adenosyl-L-methionine + phosphate + diphosphate. It participates in amino-acid biosynthesis; S-adenosyl-L-methionine biosynthesis; S-adenosyl-L-methionine from L-methionine: step 1/1. Catalyzes the formation of S-adenosylmethionine (AdoMet) from methionine and ATP. The overall synthetic reaction is composed of two sequential steps, AdoMet formation and the subsequent tripolyphosphate hydrolysis which occurs prior to release of AdoMet from the enzyme. The polypeptide is S-adenosylmethionine synthase (Porphyromonas gingivalis (strain ATCC 33277 / DSM 20709 / CIP 103683 / JCM 12257 / NCTC 11834 / 2561)).